Here is a 207-residue protein sequence, read N- to C-terminus: NADH-ubiquinone oxidoreductase chain 6 (207 aa).

Helical transmembrane passes span 15 to 35, 40 to 60, 66 to 86, 116 to 136, and 184 to 204; these read ILLDIISILSIISSIAIILVS, SILYLIILFINIAIYLYLIGI, LYILVYIGAIAVLFLFILSLF, LFILIIIIFYYNMINYFNNIY, and ILLIFISFLLLFSILSAIVLT.

It belongs to the complex I subunit 6 family.

It is found in the mitochondrion membrane. The catalysed reaction is a ubiquinone + NADH + 5 H(+)(in) = a ubiquinol + NAD(+) + 4 H(+)(out). In terms of biological role, core subunit of the mitochondrial membrane respiratory chain NADH dehydrogenase (Complex I) that is believed to belong to the minimal assembly required for catalysis. Complex I functions in the transfer of electrons from NADH to the respiratory chain. The immediate electron acceptor for the enzyme is believed to be ubiquinone. The chain is NADH-ubiquinone oxidoreductase chain 6 (ND6) from Wickerhamomyces canadensis (Yeast).